A 314-amino-acid polypeptide reads, in one-letter code: Nucleotide-binding protein CE1710 (314 aa).

Residues 1 to 29 (MNQTPGSTVPETATPVTSPASSPSAPETT) form a disordered region. The span at 7-29 (STVPETATPVTSPASSPSAPETT) shows a compositional bias: low complexity. 37–44 (GMSGAGLS) is an ATP binding site. 88–91 (DVRS) is a binding site for GTP.

The protein belongs to the RapZ-like family.

In terms of biological role, displays ATPase and GTPase activities. This Corynebacterium efficiens (strain DSM 44549 / YS-314 / AJ 12310 / JCM 11189 / NBRC 100395) protein is Nucleotide-binding protein CE1710.